We begin with the raw amino-acid sequence, 344 residues long: Oxygen sensor histidine kinase NreB (344 aa).

4 residues coordinate [4Fe-4S] cluster: C58, C61, C73, and C76. Positions 152-344 (RISRELHDSV…GTNVTLNIPI (193 aa)) constitute a Histidine kinase domain. Phosphohistidine; by autocatalysis is present on H158.

The cofactor is [4Fe-4S] cluster. Autophosphorylated.

The protein resides in the cytoplasm. The enzyme catalyses ATP + protein L-histidine = ADP + protein N-phospho-L-histidine.. Functionally, member of the two-component regulatory system NreB/NreC involved in the control of dissimilatory nitrate/nitrite reduction in response to oxygen. NreB functions as a direct oxygen sensor histidine kinase which is autophosphorylated, in the absence of oxygen, probably at the conserved histidine residue, and transfers its phosphate group probably to a conserved aspartate residue of NreC. NreB/NreC activates the expression of the nitrate (narGHJI) and nitrite (nir) reductase operons, as well as the putative nitrate transporter gene narT. This is Oxygen sensor histidine kinase NreB (nreB) from Staphylococcus aureus (strain Mu3 / ATCC 700698).